Here is a 445-residue protein sequence, read N- to C-terminus: Phosphoglucosamine mutase (445 aa).

The active-site Phosphoserine intermediate is Ser102. 4 residues coordinate Mg(2+): Ser102, Asp240, Asp242, and Asp244. Phosphoserine is present on Ser102.

This sequence belongs to the phosphohexose mutase family. The cofactor is Mg(2+). In terms of processing, activated by phosphorylation.

The enzyme catalyses alpha-D-glucosamine 1-phosphate = D-glucosamine 6-phosphate. Its function is as follows. Catalyzes the conversion of glucosamine-6-phosphate to glucosamine-1-phosphate. This chain is Phosphoglucosamine mutase, found in Mycobacterium sp. (strain JLS).